The primary structure comprises 156 residues: Small ribosomal subunit protein uS7 (156 aa).

It belongs to the universal ribosomal protein uS7 family. As to quaternary structure, part of the 30S ribosomal subunit. Contacts proteins S9 and S11.

One of the primary rRNA binding proteins, it binds directly to 16S rRNA where it nucleates assembly of the head domain of the 30S subunit. Is located at the subunit interface close to the decoding center, probably blocks exit of the E-site tRNA. In Lactobacillus delbrueckii subsp. bulgaricus (strain ATCC 11842 / DSM 20081 / BCRC 10696 / JCM 1002 / NBRC 13953 / NCIMB 11778 / NCTC 12712 / WDCM 00102 / Lb 14), this protein is Small ribosomal subunit protein uS7.